A 370-amino-acid polypeptide reads, in one-letter code: Cobalt-precorrin-5B C(1)-methyltransferase (370 aa).

It belongs to the CbiD family.

It carries out the reaction Co-precorrin-5B + S-adenosyl-L-methionine = Co-precorrin-6A + S-adenosyl-L-homocysteine. It functions in the pathway cofactor biosynthesis; adenosylcobalamin biosynthesis; cob(II)yrinate a,c-diamide from sirohydrochlorin (anaerobic route): step 6/10. Functionally, catalyzes the methylation of C-1 in cobalt-precorrin-5B to form cobalt-precorrin-6A. The chain is Cobalt-precorrin-5B C(1)-methyltransferase from Trichormus variabilis (strain ATCC 29413 / PCC 7937) (Anabaena variabilis).